Consider the following 237-residue polypeptide: Lectin alpha chain (237 aa).

Residues Glu8 and Asp10 each coordinate Mn(2+). The Ca(2+) site is built by Asp10, Tyr12, Asn14, and Asp19. A carbohydrate is bound by residues Tyr12 and Asn14. Residues Asp19 and His24 each contribute to the Mn(2+) site. Residue Leu99 to Tyr100 participates in a carbohydrate binding. Asp208 provides a ligand contact to Ca(2+). Arg228 lines the a carbohydrate pocket.

It belongs to the leguminous lectin family. As to quaternary structure, homodimer and homotetramer. Oligomerization is pH-dependent with homotetramers forming at pH 4 and above.

Its function is as follows. D-mannose/D-glucose-binding lectin. Has anti-inflammatory activity in animal models when applied intravenously. Has antinociceptive activity in mice when applied intravenously. This Canavalia boliviana protein is Lectin alpha chain.